The following is a 252-amino-acid chain: Ribosomal RNA small subunit methyltransferase J (252 aa).

S-adenosyl-L-methionine contacts are provided by residues 104 to 105 (RD), 120 to 121 (ER), and aspartate 174.

This sequence belongs to the methyltransferase superfamily. RsmJ family.

The protein resides in the cytoplasm. It catalyses the reaction guanosine(1516) in 16S rRNA + S-adenosyl-L-methionine = N(2)-methylguanosine(1516) in 16S rRNA + S-adenosyl-L-homocysteine + H(+). Specifically methylates the guanosine in position 1516 of 16S rRNA. This chain is Ribosomal RNA small subunit methyltransferase J, found in Mannheimia succiniciproducens (strain KCTC 0769BP / MBEL55E).